The following is a 545-amino-acid chain: Carboxypeptidase Y homolog A (545 aa).

The first 17 residues, 1 to 17 (MKSLALALLVGGAIAAG), serve as a signal peptide directing secretion. The propeptide occupies 18–123 (PQQQVLQAPV…KLEAYDLRVK (106 aa)). Disulfide bonds link C177/C416, C311/C325, C335/C358, C342/C351, and C380/C386. Residue N208 is glycosylated (N-linked (GlcNAc...) asparagine). Residue S264 is part of the active site. Residue D455 is part of the active site. N-linked (GlcNAc...) asparagine glycans are attached at residues N485, N491, and N506. H517 is an active-site residue.

It belongs to the peptidase S10 family.

It is found in the vacuole. The catalysed reaction is Release of a C-terminal amino acid with broad specificity.. Functionally, vacuolar carboxypeptidase involved in degradation of small peptides. Digests preferentially peptides containing an aliphatic or hydrophobic residue in P1' position, as well as methionine, leucine or phenylalanine in P1 position of ester substrate. The sequence is that of Carboxypeptidase Y homolog A (CPYA) from Blastomyces gilchristii (strain SLH14081) (Blastomyces dermatitidis).